Reading from the N-terminus, the 106-residue chain is Small ribosomal subunit protein bS20 (106 aa).

Basic residues predominate over residues 1 to 32; sequence MAQKKPKRNLSALKRHRQSLKRRLRNKAKKSA. The disordered stretch occupies residues 1–33; that stretch reads MAQKKPKRNLSALKRHRQSLKRRLRNKAKKSAI.

The protein belongs to the bacterial ribosomal protein bS20 family.

Functionally, binds directly to 16S ribosomal RNA. The polypeptide is Small ribosomal subunit protein bS20 (rpsT) (Thermus thermophilus (strain ATCC BAA-163 / DSM 7039 / HB27)).